A 272-amino-acid polypeptide reads, in one-letter code: MNPAFLKASAMPDVQSSRDERALPIEQVGIRGVRHPLMIRSNTGNFPSVGNFEMDVALPAHVKGTHMSRFMALLQKQDEAIDSTTVVALVRDMLPLLDAKEGHVQFTYTHFVKKAAPVSGVESLMDYEVTWMATAKQNDAGSVEVELGLRAQVPVMSLCPCSKEISEFGAHNQRSHVTMTVVLDTQTKMTVEDLVSAAEREASSELWGLLKRPDEKWVTERSYSNPKFVEDLVRDVAGRLKADTRIQSFVVDAENFESIHNHSAFARISHKK.

It belongs to the GTP cyclohydrolase IV family.

The catalysed reaction is GTP + H2O = 7,8-dihydroneopterin 3'-triphosphate + formate + H(+). It participates in cofactor biosynthesis; 7,8-dihydroneopterin triphosphate biosynthesis; 7,8-dihydroneopterin triphosphate from GTP: step 1/1. Functionally, converts GTP to 7,8-dihydroneopterin triphosphate. In Polynucleobacter asymbioticus (strain DSM 18221 / CIP 109841 / QLW-P1DMWA-1) (Polynucleobacter necessarius subsp. asymbioticus), this protein is GTP cyclohydrolase FolE2.